Reading from the N-terminus, the 202-residue chain is Urease accessory protein UreG (202 aa).

10 to 17 (GPVGSGKT) is a binding site for GTP.

Belongs to the SIMIBI class G3E GTPase family. UreG subfamily. Homodimer. UreD, UreF and UreG form a complex that acts as a GTP-hydrolysis-dependent molecular chaperone, activating the urease apoprotein by helping to assemble the nickel containing metallocenter of UreC. The UreE protein probably delivers the nickel.

The protein resides in the cytoplasm. Facilitates the functional incorporation of the urease nickel metallocenter. This process requires GTP hydrolysis, probably effectuated by UreG. In Synechococcus sp. (strain JA-3-3Ab) (Cyanobacteria bacterium Yellowstone A-Prime), this protein is Urease accessory protein UreG.